The sequence spans 104 residues: Large ribosomal subunit protein bL21 (104 aa).

The protein belongs to the bacterial ribosomal protein bL21 family. Part of the 50S ribosomal subunit. Contacts protein L20.

Its function is as follows. This protein binds to 23S rRNA in the presence of protein L20. This Streptococcus pyogenes serotype M1 protein is Large ribosomal subunit protein bL21.